Here is a 229-residue protein sequence, read N- to C-terminus: NAD(P)H-hydrate epimerase (229 aa).

Residues 10 to 224 (SREVDQIAIE…DIGIPPALLD (215 aa)) enclose the YjeF N-terminal domain. Residue 57–61 (NNGGD) participates in (6S)-NADPHX binding. K(+) is bound by residues N58 and D129. (6S)-NADPHX is bound by residues 133–139 (GTGIRGQ) and D167. Residue S170 coordinates K(+).

This sequence belongs to the NnrE/AIBP family. It depends on K(+) as a cofactor.

The catalysed reaction is (6R)-NADHX = (6S)-NADHX. It carries out the reaction (6R)-NADPHX = (6S)-NADPHX. Catalyzes the epimerization of the S- and R-forms of NAD(P)HX, a damaged form of NAD(P)H that is a result of enzymatic or heat-dependent hydration. This is a prerequisite for the S-specific NAD(P)H-hydrate dehydratase to allow the repair of both epimers of NAD(P)HX. This is NAD(P)H-hydrate epimerase from Rubinisphaera brasiliensis (strain ATCC 49424 / DSM 5305 / JCM 21570 / IAM 15109 / NBRC 103401 / IFAM 1448) (Planctomyces brasiliensis).